Here is a 128-residue protein sequence, read N- to C-terminus: Probable 4-amino-4-deoxy-L-arabinose-phosphoundecaprenol flippase subunit ArnF (128 aa).

Residues 1–5 (MKGYG) are Cytoplasmic-facing. A helical membrane pass occupies residues 6–26 (WGIGSVVLVTVAQLILKWGMM). Residues 27–47 (NTPLMSLADINGQFVFNHLPQ) are Periplasmic-facing. Residues 48-68 (FIAVICGLAGYALSMLCWFFA) traverse the membrane as a helical segment. At 69 to 77 (LRYLPLNRA) the chain is on the cytoplasmic side. Residues 78–98 (YPLLSLSYALVYLGAVSLPWF) traverse the membrane as a helical segment. Residues 99 to 101 (SES) are Periplasmic-facing. A helical membrane pass occupies residues 102 to 122 (ATLLKTLGAGFILLGIWLINT). The Cytoplasmic portion of the chain corresponds to 123-128 (KPIAKD).

It belongs to the ArnF family. As to quaternary structure, heterodimer of ArnE and ArnF.

It localises to the cell inner membrane. It participates in bacterial outer membrane biogenesis; lipopolysaccharide biosynthesis. Functionally, translocates 4-amino-4-deoxy-L-arabinose-phosphoundecaprenol (alpha-L-Ara4N-phosphoundecaprenol) from the cytoplasmic to the periplasmic side of the inner membrane. In Yersinia enterocolitica serotype O:8 / biotype 1B (strain NCTC 13174 / 8081), this protein is Probable 4-amino-4-deoxy-L-arabinose-phosphoundecaprenol flippase subunit ArnF.